A 96-amino-acid polypeptide reads, in one-letter code: Co-chaperonin GroES (96 aa).

It belongs to the GroES chaperonin family. In terms of assembly, heptamer of 7 subunits arranged in a ring. Interacts with the chaperonin GroEL.

It localises to the cytoplasm. Its function is as follows. Together with the chaperonin GroEL, plays an essential role in assisting protein folding. The GroEL-GroES system forms a nano-cage that allows encapsulation of the non-native substrate proteins and provides a physical environment optimized to promote and accelerate protein folding. GroES binds to the apical surface of the GroEL ring, thereby capping the opening of the GroEL channel. This Dechloromonas aromatica (strain RCB) protein is Co-chaperonin GroES.